The primary structure comprises 187 residues: Ribosome-recycling factor (187 aa).

The protein belongs to the RRF family.

The protein localises to the cytoplasm. Responsible for the release of ribosomes from messenger RNA at the termination of protein biosynthesis. May increase the efficiency of translation by recycling ribosomes from one round of translation to another. The chain is Ribosome-recycling factor from Flavobacterium psychrophilum (strain ATCC 49511 / DSM 21280 / CIP 103535 / JIP02/86).